Consider the following 855-residue polypeptide: Receptor-like protein kinase THESEUS 1 (855 aa).

The signal sequence occupies residues 1 to 22 (MVFTKSLLVLLWFLSCYTTTTS). The Extracellular portion of the chain corresponds to 23–415 (SALFNPPDNY…GGSGSKSKKK (393 aa)). Residues N41, N64, N75, N114, N118, N136, N143, N154, N168, N225, N242, N288, N353, and N376 are each glycosylated (N-linked (GlcNAc...) asparagine). Residues 416 to 436 (AVIIGSLVGAVTLILLIAVCC) form a helical membrane-spanning segment. The Cytoplasmic segment spans residues 437–855 (YCCLVASRKQ…FSQLVHPRGR (419 aa)). A Protein kinase domain is found at 510-783 (FDESSLLGVG…GDVLWNLEYA (274 aa)). ATP contacts are provided by residues 516–524 (LGVGGFGRV) and K538. Catalysis depends on D634, which acts as the Proton acceptor. The disordered stretch occupies residues 822–855 (IDRGGVNSGTGTDDDAEDATTSAVFSQLVHPRGR).

The protein belongs to the protein kinase superfamily. Ser/Thr protein kinase family. In terms of processing, autophosphorylated. Expressed in most vegetative tissues, including leaves, stems and roots, primarily in expanding cells and vascular tissue.

Its subcellular location is the cell membrane. In terms of biological role, receptor-like protein kinase required for cell elongation during vegetative growth, mostly in a brassinosteroid-(BR-) independent manner. Mediates the response of growing plant cells to the perturbation of cellulose synthesis and may act as a cell-wall-integrity sensor. Controls ectopic-lignin accumulation in cellulose-deficient mutant backgrounds. The protein is Receptor-like protein kinase THESEUS 1 (THE1) of Arabidopsis thaliana (Mouse-ear cress).